The sequence spans 310 residues: N-acetyl-gamma-glutamyl-phosphate reductase (310 aa).

C117 is a catalytic residue.

It belongs to the NAGSA dehydrogenase family. Type 2 subfamily.

It localises to the cytoplasm. It carries out the reaction N-acetyl-L-glutamate 5-semialdehyde + phosphate + NADP(+) = N-acetyl-L-glutamyl 5-phosphate + NADPH + H(+). It participates in amino-acid biosynthesis; L-arginine biosynthesis; N(2)-acetyl-L-ornithine from L-glutamate: step 3/4. Its function is as follows. Catalyzes the NADPH-dependent reduction of N-acetyl-5-glutamyl phosphate to yield N-acetyl-L-glutamate 5-semialdehyde. The protein is N-acetyl-gamma-glutamyl-phosphate reductase of Rhizobium meliloti (strain 1021) (Ensifer meliloti).